The primary structure comprises 175 residues: ATP synthase subunit b (175 aa).

The helical transmembrane segment at leucine 13 to leucine 33 threads the bilayer.

It belongs to the ATPase B chain family. In terms of assembly, F-type ATPases have 2 components, F(1) - the catalytic core - and F(0) - the membrane proton channel. F(1) has five subunits: alpha(3), beta(3), gamma(1), delta(1), epsilon(1). F(0) has four main subunits: a(1), b(2) and c(10-14). The alpha and beta chains form an alternating ring which encloses part of the gamma chain. F(1) is attached to F(0) by a central stalk formed by the gamma and epsilon chains, while a peripheral stalk is formed by the delta and b chains.

The protein resides in the cell inner membrane. In terms of biological role, f(1)F(0) ATP synthase produces ATP from ADP in the presence of a proton or sodium gradient. F-type ATPases consist of two structural domains, F(1) containing the extramembraneous catalytic core and F(0) containing the membrane proton channel, linked together by a central stalk and a peripheral stalk. During catalysis, ATP synthesis in the catalytic domain of F(1) is coupled via a rotary mechanism of the central stalk subunits to proton translocation. Functionally, component of the F(0) channel, it forms part of the peripheral stalk, linking F(1) to F(0). This Chloroherpeton thalassium (strain ATCC 35110 / GB-78) protein is ATP synthase subunit b.